A 281-amino-acid chain; its full sequence is 3-deoxy-manno-octulosonate cytidylyltransferase (281 aa).

The protein belongs to the KdsB family.

It is found in the cytoplasm. It catalyses the reaction 3-deoxy-alpha-D-manno-oct-2-ulosonate + CTP = CMP-3-deoxy-beta-D-manno-octulosonate + diphosphate. It participates in nucleotide-sugar biosynthesis; CMP-3-deoxy-D-manno-octulosonate biosynthesis; CMP-3-deoxy-D-manno-octulosonate from 3-deoxy-D-manno-octulosonate and CTP: step 1/1. It functions in the pathway bacterial outer membrane biogenesis; lipopolysaccharide biosynthesis. In terms of biological role, activates KDO (a required 8-carbon sugar) for incorporation into bacterial lipopolysaccharide in Gram-negative bacteria. The protein is 3-deoxy-manno-octulosonate cytidylyltransferase of Xanthomonas campestris pv. campestris (strain B100).